We begin with the raw amino-acid sequence, 239 residues long: Ribosomal RNA small subunit methyltransferase G (239 aa).

Residues Gly-79, Phe-84, Ala-130–Glu-131, and Arg-149 each bind S-adenosyl-L-methionine. Positions Lys-218–Ser-239 are disordered.

It belongs to the methyltransferase superfamily. RNA methyltransferase RsmG family.

It is found in the cytoplasm. Its function is as follows. Specifically methylates the N7 position of a guanine in 16S rRNA. The polypeptide is Ribosomal RNA small subunit methyltransferase G (Leuconostoc mesenteroides subsp. mesenteroides (strain ATCC 8293 / DSM 20343 / BCRC 11652 / CCM 1803 / JCM 6124 / NCDO 523 / NBRC 100496 / NCIMB 8023 / NCTC 12954 / NRRL B-1118 / 37Y)).